A 327-amino-acid chain; its full sequence is Annexin A8 (327 aa).

Annexin repeat units follow at residues 21–92 (FNPD…ALMY), 93–164 (PPYR…CLLQ), 177–249 (GLAL…TVVK), and 253–324 (NLHG…NLVG). Residues Met266, Gly268, Gly270, and Asp310 each contribute to the Ca(2+) site.

The protein belongs to the annexin family.

In terms of biological role, this protein is an anticoagulant protein that acts as an indirect inhibitor of the thromboplastin-specific complex, which is involved in the blood coagulation cascade. This is Annexin A8 (ANXA8) from Bos taurus (Bovine).